Consider the following 124-residue polypeptide: Ribonuclease pancreatic (124 aa).

The disordered stretch occupies residues 1-23; that stretch reads RESPAMKFQRQHMDSGNSPGNNP. Substrate-binding residues include Lys7 and Arg10. His12 serves as the catalytic Proton acceptor. The span at 14–23 shows a compositional bias: polar residues; the sequence is DSGNSPGNNP. 4 disulfide bridges follow: Cys26–Cys84, Cys40–Cys95, Cys58–Cys110, and Cys65–Cys72. Substrate-binding positions include 41–45 and Lys66; that span reads KPVNT. Asn76 carries an N-linked (GlcNAc...) asparagine; partial glycan. Arg85 contacts substrate. The active-site Proton donor is His119.

Belongs to the pancreatic ribonuclease family. As to quaternary structure, monomer. Interacts with and forms tight 1:1 complexes with RNH1. Dimerization of two such complexes may occur. Interaction with RNH1 inhibits this protein. In terms of tissue distribution, pancreas.

The protein localises to the secreted. It catalyses the reaction an [RNA] containing cytidine + H2O = an [RNA]-3'-cytidine-3'-phosphate + a 5'-hydroxy-ribonucleotide-3'-[RNA].. The catalysed reaction is an [RNA] containing uridine + H2O = an [RNA]-3'-uridine-3'-phosphate + a 5'-hydroxy-ribonucleotide-3'-[RNA].. Endonuclease that catalyzes the cleavage of RNA on the 3' side of pyrimidine nucleotides. Acts on single-stranded and double-stranded RNA. The protein is Ribonuclease pancreatic (RNASE1) of Balaenoptera acutorostrata (Common minke whale).